We begin with the raw amino-acid sequence, 249 residues long: ATP synthase subunit a (249 aa).

A run of 6 helical transmembrane segments spans residues 30–50 (QSPLFMLIAAAVVLVFLYVGM), 86–106 (FFPFVFAIFFFILAGNYLGLL), 115–135 (HIAVTFGLAIMVFIISILASI), 146–166 (FLPAGTPVWLAPLLVPIEIIS), 191–211 (VFAGFTIMLAGLGAFGHVLAI), and 218–238 (IALTALELLVGVLQAYVFAIL).

This sequence belongs to the ATPase A chain family. As to quaternary structure, F-type ATPases have 2 components, CF(1) - the catalytic core - and CF(0) - the membrane proton channel. CF(1) has five subunits: alpha(3), beta(3), gamma(1), delta(1), epsilon(1). CF(0) has three main subunits: a(1), b(2) and c(9-12). The alpha and beta chains form an alternating ring which encloses part of the gamma chain. CF(1) is attached to CF(0) by a central stalk formed by the gamma and epsilon chains, while a peripheral stalk is formed by the delta and b chains.

It localises to the cell inner membrane. Functionally, key component of the proton channel; it plays a direct role in the translocation of protons across the membrane. This is ATP synthase subunit a from Gluconobacter oxydans (strain 621H) (Gluconobacter suboxydans).